A 194-amino-acid chain; its full sequence is PRELI domain containing protein 3B (194 aa).

The 172-residue stretch at 1–172 folds into the PRELI/MSF1 domain; it reads MKIWTSEHVF…VIHKLNAEIE (172 aa). Residues S46 and S51 each carry the phosphoserine modification.

This sequence belongs to the slowmo family.

The chain is PRELI domain containing protein 3B (PRELID3B) from Homo sapiens (Human).